The sequence spans 330 residues: 2-alkyl-3-oxoalkanoate reductase (330 aa).

Tyrosine 139 serves as the catalytic Proton acceptor. Lysine 143 contacts NADP(+).

The protein belongs to the 3-beta-HSD family. As to quaternary structure, homodimer.

It catalyses the reaction a (2R,3S)-2-alkyl-3-hydroxyalkanoate + NADP(+) = an (R)-2-alkyl-3-oxoalkanoate + NADPH + H(+). Its function is as follows. Involved in olefin biosynthesis. Catalyzes the reversible stereospecific NADPH-dependent reduction of 2-alkyl-3-oxoalkanoic acids to 2-alkyl-3-hydroxyalkanoic acids. In the oxidative direction, syn-2-decyl-3-hydroxytetradecanoic acid is the preferred substrate. In the reductive direction, (2R/S)-2-hexyl-3-ketodecanoic acid is accepted as substrate. This chain is 2-alkyl-3-oxoalkanoate reductase, found in Stenotrophomonas maltophilia (strain K279a).